The following is a 137-amino-acid chain: Large-conductance mechanosensitive channel (137 aa).

2 helical membrane passes run 10-30 (FAMR…AAFG) and 76-96 (GVFL…FMAI).

This sequence belongs to the MscL family. In terms of assembly, homopentamer.

The protein localises to the cell inner membrane. Its function is as follows. Channel that opens in response to stretch forces in the membrane lipid bilayer. May participate in the regulation of osmotic pressure changes within the cell. The chain is Large-conductance mechanosensitive channel from Erwinia tasmaniensis (strain DSM 17950 / CFBP 7177 / CIP 109463 / NCPPB 4357 / Et1/99).